The chain runs to 515 residues: MTDRVIIFDTTLRDGEQALKASLTVKEKLQIALALERLGVDVMEVGFPVSSQGDFESVQTIARHIKNARVAALSRAVDKDIDAAYEALKVAEAFRIHTFIASSALHVEAKLKRSFDDVVGMAVAAVKRARNYTDDVEFSCEDAGRTGIDNICRIVEAAINAGATTVNIPDTVGFCLPNEYGNIIAQVRNCVPNIDKAVISVHCHNDLGMATANSLTAVQNGARQIECTINGIGERAGNTSLEEVVMAMKVRQDFMGVDTHINTQEIHRVSQMVSQLCNMPIQPNKAIVGSNAFAHSSGIHQDGMLKNKNTYEILSPETIGLKKEKLNLTARSGRAAVKGHMADMGYNEQDYDLDKLYDEFLKLADKKGQVFDYDLEALAFIDMQQGDEDRLVLDKLSAHSTKEYPATAFVQLKLDGEKLSTSSIGGNGPVDAVYNAILNLTGLEIKMSHYNLTAKGEGAEALGQVDIVVEHKGRKFHGVGLATDIVESSALALVHAINAIYRAHKVADIKNHKHH.

The region spanning 5–267 is the Pyruvate carboxyltransferase domain; sequence VIIFDTTLRD…DTHINTQEIH (263 aa). Positions 14, 202, 204, and 238 each coordinate Mn(2+). The tract at residues 392–515 is regulatory domain; sequence VLDKLSAHST…VADIKNHKHH (124 aa).

The protein belongs to the alpha-IPM synthase/homocitrate synthase family. LeuA type 1 subfamily. As to quaternary structure, homodimer. Mn(2+) is required as a cofactor.

It localises to the cytoplasm. The catalysed reaction is 3-methyl-2-oxobutanoate + acetyl-CoA + H2O = (2S)-2-isopropylmalate + CoA + H(+). It functions in the pathway amino-acid biosynthesis; L-leucine biosynthesis; L-leucine from 3-methyl-2-oxobutanoate: step 1/4. Functionally, catalyzes the condensation of the acetyl group of acetyl-CoA with 3-methyl-2-oxobutanoate (2-ketoisovalerate) to form 3-carboxy-3-hydroxy-4-methylpentanoate (2-isopropylmalate). This is 2-isopropylmalate synthase from Haemophilus influenzae (strain ATCC 51907 / DSM 11121 / KW20 / Rd).